Here is a 313-residue protein sequence, read N- to C-terminus: MSGKIQDGVAIRRMSDAILFFTNYTSRNLIDQRDITLSTLHTIRRNLGTCWSIALLNCWNETSSHAGVMRFILDIAFSLRFGDFTMLGACGNVDPFDDAGQIFLKSCKATGRNDSCFLTPSDNFGYYLVSFLNKEQLKCVVDMNVGIHNIEDIYVTRMESIMEFIYYYYTESGRDVVNWLEKLESADAGLAAHAKSKRLMRAEIDLIRREILERTRLFINSNRNSFHDHHRELVRRYRTIWADVISDGDVAEETSTEATTSAQHSTALSAELDEVDEYDHPNDGLLTFRREEDAASNLDSLLGSLSGEDAFQG.

It belongs to the phytoreovirus minor outer capsid protein P9 family.

The protein localises to the virion. It is found in the host cytoplasm. Functionally, minor outer capsid protein. The polypeptide is Minor outer capsid protein P9 (Catharanthus roseus (Madagascar periwinkle)).